A 571-amino-acid polypeptide reads, in one-letter code: Sulfite reductase [NADPH] hemoprotein beta-component (571 aa).

Cys-436, Cys-442, Cys-481, and Cys-485 together coordinate [4Fe-4S] cluster. Cys-485 contributes to the siroheme binding site.

This sequence belongs to the nitrite and sulfite reductase 4Fe-4S domain family. As to quaternary structure, alpha(8)-beta(8). The alpha component is a flavoprotein, the beta component is a hemoprotein. Siroheme is required as a cofactor. Requires [4Fe-4S] cluster as cofactor.

The catalysed reaction is hydrogen sulfide + 3 NADP(+) + 3 H2O = sulfite + 3 NADPH + 4 H(+). Its pathway is sulfur metabolism; hydrogen sulfide biosynthesis; hydrogen sulfide from sulfite (NADPH route): step 1/1. Its function is as follows. Component of the sulfite reductase complex that catalyzes the 6-electron reduction of sulfite to sulfide. This is one of several activities required for the biosynthesis of L-cysteine from sulfate. The polypeptide is Sulfite reductase [NADPH] hemoprotein beta-component (Bacillus velezensis (strain DSM 23117 / BGSC 10A6 / LMG 26770 / FZB42) (Bacillus amyloliquefaciens subsp. plantarum)).